The primary structure comprises 231 residues: Large ribosomal subunit protein uL1 (231 aa).

The protein belongs to the universal ribosomal protein uL1 family. In terms of assembly, part of the 50S ribosomal subunit.

Its function is as follows. Binds directly to 23S rRNA. The L1 stalk is quite mobile in the ribosome, and is involved in E site tRNA release. Protein L1 is also a translational repressor protein, it controls the translation of the L11 operon by binding to its mRNA. The polypeptide is Large ribosomal subunit protein uL1 (Halalkalibacterium halodurans (strain ATCC BAA-125 / DSM 18197 / FERM 7344 / JCM 9153 / C-125) (Bacillus halodurans)).